Reading from the N-terminus, the 72-residue chain is Nod factor export ATP-binding protein I (72 aa).

This sequence belongs to the ABC transporter superfamily. Lipooligosaccharide exporter (TC 3.A.1.102) family. As to quaternary structure, the complex is composed of two ATP-binding proteins (NodI) and two transmembrane proteins (NodJ).

The protein localises to the cell inner membrane. Functionally, part of the ABC transporter complex NodIJ involved in the export of the nodulation factors (Nod factors), the bacterial signal molecules that induce symbiosis and subsequent nodulation induction. Nod factors are LCO (lipo-chitin oligosaccharide), a modified beta-1,4-linked N-acetylglucosamine oligosaccharide. This subunit is responsible for energy coupling to the transport system. The polypeptide is Nod factor export ATP-binding protein I (Rhizobium leguminosarum bv. trifolii).